The following is a 609-amino-acid chain: (R)-linalool synthase TPS5, chloroplastic (609 aa).

A chloroplast-targeting transit peptide spans 1 to 42; that stretch reads MVSILSNIGMMVVTFKRPSLFTSLRRRSANNIIITKHSHPIS. Residues Arg325, Asp362, Asp366, Arg503, and Asp506 each coordinate (2E)-geranyl diphosphate. Positions 362 and 366 each coordinate Mg(2+). The short motif at 362–366 is the DDXXD motif element; sequence DDIYD. Mg(2+) is bound by residues Asp506, Thr510, and Glu514.

Belongs to the terpene synthase family. Tpsb subfamily. Mg(2+) serves as cofactor. It depends on Mn(2+) as a cofactor. Highly expressed in young fruits and plant tops. Expressed in flower buds and trichomes of petioles and stems. Expressed at low levels in young leaves, stems, petioles, sepals and petals.

It localises to the plastid. The protein resides in the chloroplast. The enzyme catalyses (2E)-geranyl diphosphate + H2O = (R)-linalool + diphosphate. It catalyses the reaction (2E,6E)-farnesyl diphosphate + H2O = (6E)-nerolidol + diphosphate. The protein operates within secondary metabolite biosynthesis; terpenoid biosynthesis. In terms of biological role, involved in monoterpene (C10) biosynthesis in glandular trichomes. Converts geranyl diphosphate to linalool in glandular trichomes in response to jasmonate (JA). Can convert farnesyl diphosphate to nerolidol in vitro. The protein is (R)-linalool synthase TPS5, chloroplastic of Solanum lycopersicum (Tomato).